The chain runs to 118 residues: MVQGYIHGLDSYNINEASLLIRSDLVKVVEAITGNNDASYIFLLIIITIIFALTMYTSVQVLIRTMRTTISKSVMDDNLKKKYGFERMRNKKRKKRSNATDTAILMNTMLDDDSTDEF.

Residues 41-61 (IFLLIIITIIFALTMYTSVQV) traverse the membrane as a helical segment.

The protein resides in the host membrane. This is an uncharacterized protein from Ostreid herpesvirus 1 (isolate France) (OsHV-1).